Here is a 376-residue protein sequence, read N- to C-terminus: Succinyl-diaminopimelate desuccinylase (376 aa).

Residue His-66 participates in Zn(2+) binding. The active site involves Asp-68. Asp-99 lines the Zn(2+) pocket. Catalysis depends on Glu-133, which acts as the Proton acceptor. The Zn(2+) site is built by Glu-134, Glu-162, and His-349.

Belongs to the peptidase M20A family. DapE subfamily. As to quaternary structure, homodimer. The cofactor is Zn(2+). Requires Co(2+) as cofactor.

The enzyme catalyses N-succinyl-(2S,6S)-2,6-diaminopimelate + H2O = (2S,6S)-2,6-diaminopimelate + succinate. It participates in amino-acid biosynthesis; L-lysine biosynthesis via DAP pathway; LL-2,6-diaminopimelate from (S)-tetrahydrodipicolinate (succinylase route): step 3/3. In terms of biological role, catalyzes the hydrolysis of N-succinyl-L,L-diaminopimelic acid (SDAP), forming succinate and LL-2,6-diaminopimelate (DAP), an intermediate involved in the bacterial biosynthesis of lysine and meso-diaminopimelic acid, an essential component of bacterial cell walls. The polypeptide is Succinyl-diaminopimelate desuccinylase (Ruthia magnifica subsp. Calyptogena magnifica).